A 377-amino-acid chain; its full sequence is Chaperone protein DnaJ (377 aa).

One can recognise a J domain in the interval 5-70 (DFYEVLGVER…SKRAAYDQYG (66 aa)). Residues 136-214 (GTTVTIRVPT…CHGQGRVEEQ (79 aa)) form a CR-type zinc finger. Zn(2+) contacts are provided by cysteine 149, cysteine 152, cysteine 166, cysteine 169, cysteine 188, cysteine 191, cysteine 202, and cysteine 205. CXXCXGXG motif repeat units follow at residues 149–156 (CKTCNGSG), 166–173 (CTTCGGIG), 188–195 (CPRCHGTG), and 202–209 (CGSCHGQG).

Belongs to the DnaJ family. Homodimer. The cofactor is Zn(2+).

Its subcellular location is the cytoplasm. In terms of biological role, participates actively in the response to hyperosmotic and heat shock by preventing the aggregation of stress-denatured proteins and by disaggregating proteins, also in an autonomous, DnaK-independent fashion. Unfolded proteins bind initially to DnaJ; upon interaction with the DnaJ-bound protein, DnaK hydrolyzes its bound ATP, resulting in the formation of a stable complex. GrpE releases ADP from DnaK; ATP binding to DnaK triggers the release of the substrate protein, thus completing the reaction cycle. Several rounds of ATP-dependent interactions between DnaJ, DnaK and GrpE are required for fully efficient folding. Also involved, together with DnaK and GrpE, in the DNA replication of plasmids through activation of initiation proteins. The polypeptide is Chaperone protein DnaJ (Pseudomonas aeruginosa (strain LESB58)).